The following is a 279-amino-acid chain: Methyltransferase ausD (279 aa).

Residues 124-125, 152-153, and Arg244 each bind S-adenosyl-L-methionine; these read DL and DI.

It belongs to the class I-like SAM-binding methyltransferase superfamily. As to quaternary structure, homodimer.

It participates in secondary metabolite biosynthesis; terpenoid biosynthesis. Its function is as follows. Methyltransferase; part of the gene cluster that mediates the biosynthesis of calidodehydroaustin, a fungal meroterpenoid. The first step of the pathway is the synthesis of 3,5-dimethylorsellinic acid by the polyketide synthase ausA. 3,5-dimethylorsellinic acid is then prenylated by the polyprenyl transferase ausN. Further epoxidation by the FAD-dependent monooxygenase ausM and cyclization by the probable terpene cyclase ausL lead to the formation of protoaustinoid A. Protoaustinoid A is then oxidized to spiro-lactone preaustinoid A3 by the combined action of the FAD-binding monooxygenases ausB and ausC, and the dioxygenase ausE. Acid-catalyzed keto-rearrangement and ring contraction of the tetraketide portion of preaustinoid A3 by ausJ lead to the formation of preaustinoid A4. The aldo-keto reductase ausK, with the help of ausH, is involved in the next step by transforming preaustinoid A4 into isoaustinone which is in turn hydroxylated by the P450 monooxygenase ausI to form austinolide. The cytochrome P450 monooxygenase ausG modifies austinolide to austinol. Austinol is further acetylated to austin by the O-acetyltransferase ausP, which spontaneously changes to dehydroaustin. The cytochrome P450 monooxygenase ausR then converts dehydroaustin is into 7-dehydrodehydroaustin. The hydroxylation catalyzed by ausR permits the O-acetyltransferase ausQ to add an additional acetyl group to the molecule, leading to the formation of acetoxydehydroaustin. The short chain dehydrogenase ausT catalyzes the reduction of the double bond present between carbon atoms 1 and 2 to convert 7-dehydrodehydroaustin into 1,2-dihydro-7-hydroxydehydroaustin. AusQ catalyzes not only an acetylation reaction but also the addition of the PKS ausV diketide product to 1,2-dihydro-7-hydroxydehydroaustin, forming precalidodehydroaustin. Finally, the iron/alpha-ketoglutarate-dependent dioxygenase converts precalidodehydroaustin into calidodehydroaustin. The chain is Methyltransferase ausD from Aspergillus calidoustus.